A 77-amino-acid polypeptide reads, in one-letter code: UPF0291 protein OB1671 (77 aa).

Residues 56–77 (DPEGKDVTPQKLRDYQDRNKKH) form a disordered region. The segment covering 57 to 77 (PEGKDVTPQKLRDYQDRNKKH) has biased composition (basic and acidic residues).

It belongs to the UPF0291 family.

The protein resides in the cytoplasm. This is UPF0291 protein OB1671 from Oceanobacillus iheyensis (strain DSM 14371 / CIP 107618 / JCM 11309 / KCTC 3954 / HTE831).